Reading from the N-terminus, the 444-residue chain is Homogentisate 1,2-dioxygenase (444 aa).

His298 functions as the Proton acceptor in the catalytic mechanism. Residues His341 and Glu347 each contribute to the Fe cation site. Positions 356 and 377 each coordinate homogentisate. His377 is a binding site for Fe cation.

This sequence belongs to the homogentisate dioxygenase family. As to quaternary structure, hexamer; dimer of trimers. Fe cation serves as cofactor.

The catalysed reaction is homogentisate + O2 = 4-maleylacetoacetate + H(+). It participates in amino-acid degradation; L-phenylalanine degradation; acetoacetate and fumarate from L-phenylalanine: step 4/6. In terms of biological role, involved in the catabolism of homogentisate (2,5-dihydroxyphenylacetate or 2,5-OH-PhAc), a central intermediate in the degradation of phenylalanine and tyrosine. Catalyzes the oxidative ring cleavage of the aromatic ring of homogentisate to yield maleylacetoacetate. This chain is Homogentisate 1,2-dioxygenase, found in Burkholderia orbicola (strain AU 1054).